Reading from the N-terminus, the 590-residue chain is Sperm-associated microtubule inner protein 4 (590 aa).

A Phosphothreonine modification is found at T219. Phosphoserine is present on residues S407 and S422. Residue K427 forms a Glycyl lysine isopeptide (Lys-Gly) (interchain with G-Cter in SUMO2) linkage. Phosphotyrosine is present on Y442. S485 carries the phosphoserine modification. Residue K545 forms a Glycyl lysine isopeptide (Lys-Gly) (interchain with G-Cter in SUMO2) linkage. S547 is subject to Phosphoserine.

In terms of tissue distribution, predominantly expressed in the testes.

It localises to the cytoplasm. Its subcellular location is the cytoskeleton. The protein resides in the microtubule organizing center. It is found in the centrosome. The protein localises to the flagellum axoneme. Its function is as follows. Microtubule inner protein (MIP) part of the dynein-decorated doublet microtubules (DMTs) in flagellum axoneme. May serve to reinforce and thus stabilize the microtubule structure in the sperm flagella. The polypeptide is Sperm-associated microtubule inner protein 4 (Homo sapiens (Human)).